Here is a 751-residue protein sequence, read N- to C-terminus: Collagen alpha-1(XIII) chain (751 aa).

A disordered region spans residues 1-24 (MVAERTRKAAASGSRGPGELGAPG). Residues 1–40 (MVAERTRKAAASGSRGPGELGAPGPGTVALAEQCARLPSP) lie on the Cytoplasmic side of the membrane. Residues 1–119 (MVAERTRKAA…KMSPGCNCPP (119 aa)) are nonhelical region 1 (NC1). Gly residues predominate over residues 15–24 (RGPGELGAPG). A helical; Signal-anchor for type II membrane protein transmembrane segment spans residues 41 to 59 (GCCGLLALALCSLALSLLA). Residues 60 to 751 (HFRTAELQAR…GLPVQGCWNK (692 aa)) lie on the Extracellular side of the membrane. 3 disordered regions span residues 108 to 127 (APKMSPGCNCPPGPPGPTGR), 190 to 225 (PGHPGPKGEMGLVGPRGQPGPQGQKGEKGQCGEYPH), and 265 to 449 (TFQG…EMVD). A compositionally biased stretch (pro residues) spans 116 to 125 (NCPPGPPGPT). The tract at residues 120 to 223 (GPPGPTGRPG…KGEKGQCGEY (104 aa)) is triple-helical region 1 (COL1). Positions 204 to 213 (PRGQPGPQGQ) are enriched in low complexity. The span at 214–225 (KGEKGQCGEYPH) shows a compositional bias: basic and acidic residues. The segment at 224 to 273 (PHREYPGGMLAALRSNPIMSLKLLPLLNSVRLAPPPVIKRRTFQGEQSQT) is nonhelical region 2 (NC2). Positions 274–445 (GIQGPPGPPG…KGAKGEPGKG (172 aa)) are triple-helical region 2 (COL2). Composition is skewed to pro residues over residues 278-288 (PPGPPGPPGPS), 296-312 (LPGPIGPPGLPGPPGPK), and 391-402 (PGPPGLPGPPGP). The segment covering 403 to 436 (KGEAGVDGQAGPPGQQGDKGQPGAAGEQGPSGPK) has biased composition (low complexity). Positions 438–447 (AKGEPGKGEM) are enriched in basic and acidic residues. Residues 446–467 (EMVDYNGSINEALQEIRTLALM) form a nonhelical region 3 (NC3) region. N-linked (GlcNAc...) asparagine glycosylation occurs at N451. The tract at residues 466–751 (LMGPPGLPGQ…GLPVQGCWNK (286 aa)) is disordered. A triple-helical region 3 (COL3) region spans residues 468 to 733 (GPPGLPGQTG…KGDQGAPGLD (266 aa)). The span at 470-484 (PGLPGQTGPPGPPGT) shows a compositional bias: pro residues. 3 stretches are compositionally biased toward basic and acidic residues: residues 499 to 509 (HDGDKGPRGKP), 557 to 568 (TGEKGEPGDEGR), and 586 to 596 (EKGEAGEKGDP). Over residues 601 to 613 (PGPPGPEGPPGPP) the composition is skewed to pro residues. The span at 615–628 (LQGFPGPKGEAGLE) shows a compositional bias: low complexity. Basic and acidic residues predominate over residues 630–643 (SKGEKGSQGEKGDR). Over residues 658–673 (PGPPGTPGPIGVPGPA) the composition is skewed to pro residues. Residues 684-699 (DPGMTGPTGAAGLPGL) are compositionally biased toward low complexity. The segment covering 706–726 (KGNRGERGKKGSRGPKGDKGD) has biased composition (basic and acidic residues). The nonhelical region 4 (NC4) stretch occupies residues 734–751 (APCPLGEDGLPVQGCWNK).

As to quaternary structure, homotrimer; disulfide-linked. Nucleation of the type XIII collagen triple helix is likely to occur at the N-terminal region with triple helix formation proceeding from the N- to the C-terminus. Interacts with FN1, perlecan/HSPG2 and NID2.

It localises to the cell membrane. The protein resides in the postsynaptic cell membrane. Its function is as follows. Involved in cell-matrix and cell-cell adhesion interactions that are required for normal development. May participate in the linkage between muscle fiber and basement membrane. May play a role in endochondral ossification of bone and branching morphogenesis of lung. Binds heparin. At neuromuscular junctions, may play a role in acetylcholine receptor clustering. This Mus musculus (Mouse) protein is Collagen alpha-1(XIII) chain.